The following is a 590-amino-acid chain: Aspartate--tRNA(Asp/Asn) ligase (590 aa).

Residue E175 coordinates L-aspartate. Positions 199 to 202 (QQYK) are aspartate. 2 residues coordinate L-aspartate: R221 and H450. 221-223 (RDE) provides a ligand contact to ATP. Residue E484 participates in ATP binding. R491 contacts L-aspartate. 536–539 (GVDR) contacts ATP.

Belongs to the class-II aminoacyl-tRNA synthetase family. Type 1 subfamily. In terms of assembly, homodimer.

The protein resides in the cytoplasm. It catalyses the reaction tRNA(Asx) + L-aspartate + ATP = L-aspartyl-tRNA(Asx) + AMP + diphosphate. Functionally, aspartyl-tRNA synthetase with relaxed tRNA specificity since it is able to aspartylate not only its cognate tRNA(Asp) but also tRNA(Asn). Reaction proceeds in two steps: L-aspartate is first activated by ATP to form Asp-AMP and then transferred to the acceptor end of tRNA(Asp/Asn). The sequence is that of Aspartate--tRNA(Asp/Asn) ligase from Bradyrhizobium sp. (strain BTAi1 / ATCC BAA-1182).